A 267-amino-acid chain; its full sequence is 2-keto-3-deoxy-L-rhamnonate aldolase (267 aa).

The active-site Proton acceptor is the His49. Gln151 lines the substrate pocket. Mg(2+) is bound at residue Glu153. Substrate is bound by residues Ala178 and Asp179. Residue Asp179 participates in Mg(2+) binding.

This sequence belongs to the HpcH/HpaI aldolase family. KDR aldolase subfamily. In terms of assembly, homohexamer. The cofactor is Mg(2+).

It carries out the reaction 2-dehydro-3-deoxy-L-rhamnonate = (S)-lactaldehyde + pyruvate. In terms of biological role, catalyzes the reversible retro-aldol cleavage of 2-keto-3-deoxy-L-rhamnonate (KDR) to pyruvate and lactaldehyde. In Salmonella typhi, this protein is 2-keto-3-deoxy-L-rhamnonate aldolase.